A 610-amino-acid chain; its full sequence is UvrABC system protein C (610 aa).

Residues serine 16–valine 94 enclose the GIY-YIG domain. In terms of domain architecture, UVR spans glutamine 204–valine 239.

It belongs to the UvrC family. In terms of assembly, interacts with UvrB in an incision complex.

The protein resides in the cytoplasm. In terms of biological role, the UvrABC repair system catalyzes the recognition and processing of DNA lesions. UvrC both incises the 5' and 3' sides of the lesion. The N-terminal half is responsible for the 3' incision and the C-terminal half is responsible for the 5' incision. In Photorhabdus laumondii subsp. laumondii (strain DSM 15139 / CIP 105565 / TT01) (Photorhabdus luminescens subsp. laumondii), this protein is UvrABC system protein C.